The following is a 443-amino-acid chain: MSLKHPTIAVSAPGKVFLAGGYLVLDQEYTAFVFGLNARINIIAGDIHTTAGVQLTEIVVDSPQFLDAQWRYGYHLAGEGGGIKVTQLQVGAQINPNPFVETTLSYALTYIDRVAGHRPSHSLASARLIILADNDYYSHSESDTTRSGRFAKFPVTLSNANKTGLGSSAALVTSLTASLLVHYLPEDLFSIDSDKGKRTLHNLAQAAHCAAQGKVGSGFDVATAVYGSCRYRRFSPATLNKIPEPGVAGFADALVKLVDGESEWDVEVLKDAVTMPKGVVLRMCDVDCGSKTVGMVKKVLAWKSSNPEDSKTLWDELQSRNEQLIATLNAGDVAQLPEKINAVREKIREMGSASDVPIEPESQTELLDALSTVEGVHGGVVPGAGGYDALALLMKDDEETKQRVEVFLEKWAAEKGTKVKLLAVKGEMEGVRSESLDVYAGWV.

160-170 (ANKTGLGSSAA) contributes to the ATP binding site.

Belongs to the GHMP kinase family. Mevalonate kinase subfamily.

It catalyses the reaction (R)-5-phosphomevalonate + ATP = (R)-5-diphosphomevalonate + ADP. It participates in isoprenoid biosynthesis; isopentenyl diphosphate biosynthesis via mevalonate pathway; isopentenyl diphosphate from (R)-mevalonate: step 2/3. Phosphomevalonate kinase; part of the second module of ergosterol biosynthesis pathway that includes the middle steps of the pathway. ERG8 converts 5-phosphomevalonate to 5-diphosphomevalonate. The second module is carried out in the vacuole and involves the formation of farnesyl diphosphate, which is also an important intermediate in the biosynthesis of ubiquinone, dolichol, heme and prenylated proteins. Activity by the mevalonate kinase ERG12 (FG05912) first converts mevalonate into 5-phosphomevalonate. 5-phosphomevalonate is then further converted to 5-diphosphomevalonate by the phosphomevalonate kinase ERG8 (FG09764). The diphosphomevalonate decarboxylase ERG19 (FG10424) then produces isopentenyl diphosphate. The isopentenyl-diphosphate delta-isomerase IDI1 (FG09722) then catalyzes the 1,3-allylic rearrangement of the homoallylic substrate isopentenyl (IPP) to its highly electrophilic allylic isomer, dimethylallyl diphosphate (DMAPP). Finally the farnesyl diphosphate synthase ERG20 (FG06784) catalyzes the sequential condensation of isopentenyl pyrophosphate with dimethylallyl pyrophosphate, and then with the resultant geranylpyrophosphate to the ultimate product farnesyl pyrophosphate. This Gibberella zeae (strain ATCC MYA-4620 / CBS 123657 / FGSC 9075 / NRRL 31084 / PH-1) (Wheat head blight fungus) protein is Phosphomevalonate kinase ERG8.